A 479-amino-acid polypeptide reads, in one-letter code: Glutamate receptor U1 (479 aa).

The first 17 residues, M1–G17, serve as a signal peptide directing secretion. Residues C18 to K163 are Extracellular-facing. N-linked (GlcNAc...) asparagine glycosylation occurs at N79. The chain crosses the membrane as a helical span at residues E164–G184. The Cytoplasmic portion of the chain corresponds to R185–R229. A helical transmembrane segment spans residues I230–F250. Residues A251 to T414 lie on the Extracellular side of the membrane. N-linked (GlcNAc...) asparagine glycosylation is present at N282. A helical membrane pass occupies residues L415 to I435. The Cytoplasmic segment spans residues E436–S479.

It belongs to the glutamate-gated ion channel (TC 1.A.10.1) family. As to quaternary structure, homomeric.

Its subcellular location is the cell membrane. The protein resides in the postsynaptic cell membrane. Functionally, receptor for glutamate. L-glutamate acts as an excitatory neurotransmitter at many synapses in the central nervous system. The postsynaptic actions of Glu are mediated by a variety of receptors that are named according to their selective agonists. This receptor binds domoate &gt; kainate &gt; AMPA &gt; NBQX &gt; glutamate. In Xenopus laevis (African clawed frog), this protein is Glutamate receptor U1 (kbp).